Consider the following 193-residue polypeptide: Adenine phosphoribosyltransferase (193 aa).

It belongs to the purine/pyrimidine phosphoribosyltransferase family. Homodimer.

It is found in the cytoplasm. It carries out the reaction AMP + diphosphate = 5-phospho-alpha-D-ribose 1-diphosphate + adenine. Its pathway is purine metabolism; AMP biosynthesis via salvage pathway; AMP from adenine: step 1/1. Its function is as follows. Catalyzes a salvage reaction resulting in the formation of AMP, that is energically less costly than de novo synthesis. The chain is Adenine phosphoribosyltransferase from Chromobacterium violaceum (strain ATCC 12472 / DSM 30191 / JCM 1249 / CCUG 213 / NBRC 12614 / NCIMB 9131 / NCTC 9757 / MK).